The following is a 180-amino-acid chain: 3-phenylpropionate/cinnamic acid dioxygenase subunit beta (180 aa).

Belongs to the bacterial ring-hydroxylating dioxygenase beta subunit family. This dioxygenase system consists of four proteins: the two subunits of the hydroxylase component (HcaE and HcaF), a ferredoxin (HcaC) and a ferredoxin reductase (HcaD).

The enzyme catalyses 3-phenylpropanoate + NADH + O2 + H(+) = 3-(cis-5,6-dihydroxycyclohexa-1,3-dien-1-yl)propanoate + NAD(+). It catalyses the reaction (E)-cinnamate + NADH + O2 + H(+) = (2E)-3-(cis-5,6-dihydroxycyclohexa-1,3-dien-1-yl)prop-2-enoate + NAD(+). Its pathway is aromatic compound metabolism; 3-phenylpropanoate degradation. In terms of biological role, part of the multicomponent 3-phenylpropionate dioxygenase. Converts 3-phenylpropionic acid (PP) and cinnamic acid (CI) into 3-phenylpropionate-dihydrodiol (PP-dihydrodiol) and cinnamic acid-dihydrodiol (CI-dihydrodiol), respectively. The chain is 3-phenylpropionate/cinnamic acid dioxygenase subunit beta from Photorhabdus laumondii subsp. laumondii (strain DSM 15139 / CIP 105565 / TT01) (Photorhabdus luminescens subsp. laumondii).